A 162-amino-acid chain; its full sequence is Transcriptional repressor NrdR (162 aa).

Residues 1–21 (MNCPDCGNGRTRVIDTGASSD) are disordered. A zinc finger lies at 3-34 (CPDCGNGRTRVIDTGASSDGASVRRRRECQRC). The ATP-cone domain maps to 49-139 (LQVKKRDGTI…VYKAFSEPQE (91 aa)).

Belongs to the NrdR family. It depends on Zn(2+) as a cofactor.

Negatively regulates transcription of bacterial ribonucleotide reductase nrd genes and operons by binding to NrdR-boxes. In Natronomonas pharaonis (strain ATCC 35678 / DSM 2160 / CIP 103997 / JCM 8858 / NBRC 14720 / NCIMB 2260 / Gabara) (Halobacterium pharaonis), this protein is Transcriptional repressor NrdR.